The primary structure comprises 211 residues: Protein-L-isoaspartate O-methyltransferase (211 aa).

S62 is a catalytic residue.

Belongs to the methyltransferase superfamily. L-isoaspartyl/D-aspartyl protein methyltransferase family.

The protein localises to the cytoplasm. It carries out the reaction [protein]-L-isoaspartate + S-adenosyl-L-methionine = [protein]-L-isoaspartate alpha-methyl ester + S-adenosyl-L-homocysteine. Catalyzes the methyl esterification of L-isoaspartyl residues in peptides and proteins that result from spontaneous decomposition of normal L-aspartyl and L-asparaginyl residues. It plays a role in the repair and/or degradation of damaged proteins. The sequence is that of Protein-L-isoaspartate O-methyltransferase from Shewanella pealeana (strain ATCC 700345 / ANG-SQ1).